A 608-amino-acid polypeptide reads, in one-letter code: Aspartate--tRNA(Asp/Asn) ligase (608 aa).

Glutamate 175 serves as a coordination point for L-aspartate. Residues 199–202 (QLFK) form an aspartate region. Arginine 221 lines the L-aspartate pocket. Residues 221-223 (RDE) and glutamine 230 contribute to the ATP site. Position 453 (histidine 453) interacts with L-aspartate. Glutamate 487 serves as a coordination point for ATP. An L-aspartate-binding site is contributed by arginine 494. An ATP-binding site is contributed by 539–542 (GWDR). Residues 566-608 (IDPLTDAPAAITPQQRKEAGIDAKPKPKAEAQAEAQAEESAEK) are disordered. Residues 580-596 (QRKEAGIDAKPKPKAEA) are compositionally biased toward basic and acidic residues.

The protein belongs to the class-II aminoacyl-tRNA synthetase family. Type 1 subfamily. Homodimer.

The protein resides in the cytoplasm. It carries out the reaction tRNA(Asx) + L-aspartate + ATP = L-aspartyl-tRNA(Asx) + AMP + diphosphate. Aspartyl-tRNA synthetase with relaxed tRNA specificity since it is able to aspartylate not only its cognate tRNA(Asp) but also tRNA(Asn). Reaction proceeds in two steps: L-aspartate is first activated by ATP to form Asp-AMP and then transferred to the acceptor end of tRNA(Asp/Asn). In Corynebacterium glutamicum (strain ATCC 13032 / DSM 20300 / JCM 1318 / BCRC 11384 / CCUG 27702 / LMG 3730 / NBRC 12168 / NCIMB 10025 / NRRL B-2784 / 534), this protein is Aspartate--tRNA(Asp/Asn) ligase.